A 1178-amino-acid chain; its full sequence is DNA-directed RNA polymerase subunit beta' (1178 aa).

Cys60, Cys62, Cys75, and Cys78 together coordinate Zn(2+). Mg(2+) contacts are provided by Asp450, Asp452, and Asp454. Zn(2+) is bound by residues Cys795, Cys869, Cys876, and Cys879.

It belongs to the RNA polymerase beta' chain family. In terms of assembly, the RNAP catalytic core consists of 2 alpha, 1 beta, 1 beta' and 1 omega subunit. When a sigma factor is associated with the core the holoenzyme is formed, which can initiate transcription. Mg(2+) serves as cofactor. It depends on Zn(2+) as a cofactor.

The enzyme catalyses RNA(n) + a ribonucleoside 5'-triphosphate = RNA(n+1) + diphosphate. In terms of biological role, DNA-dependent RNA polymerase catalyzes the transcription of DNA into RNA using the four ribonucleoside triphosphates as substrates. This chain is DNA-directed RNA polymerase subunit beta', found in Clostridium botulinum (strain Langeland / NCTC 10281 / Type F).